The following is a 1343-amino-acid chain: Vascular endothelial growth factor receptor 2 (1343 aa).

A signal peptide spans 1 to 19; sequence MESRALLAVALWFCVETRA. At 20 to 760 the chain is on the extracellular side; that stretch reads ASVGLPGDSL…EGVQEKTNLE (741 aa). Residues asparagine 46, asparagine 96, asparagine 143, asparagine 158, and asparagine 245 are each glycosylated (N-linked (GlcNAc...) asparagine). 7 consecutive Ig-like C2-type domains span residues 46–109, 141–207, 224–320, 328–414, 421–540, 547–654, and 663–749; these read NTTL…RDTD, NKNK…INDE, YDVV…KNKT, PFIA…HMVS, PQIG…RVIS, PEIT…LVKQ, and PMIT…TLFI. A disulfide bond links cysteine 53 and cysteine 103. Cysteine 150 and cysteine 200 are oxidised to a cystine. Cysteine 246 and cysteine 307 are oxidised to a cystine. N-linked (GlcNAc...) asparagine glycosylation is found at asparagine 318, asparagine 374, asparagine 395, asparagine 507, asparagine 576, asparagine 609, asparagine 615, asparagine 627, asparagine 671, asparagine 700, and asparagine 717. 2 cysteine pairs are disulfide-bonded: cysteine 445/cysteine 526 and cysteine 567/cysteine 638. A disulfide bond links cysteine 684 and cysteine 733. The helical transmembrane segment at 761–781 threads the bilayer; the sequence is VIILVGTAVIAMFFWLLLVIL. Topologically, residues 782 to 1343 are cytoplasmic; that stretch reads VRTVKRANEG…SGTTLRSSPV (562 aa). The residue at position 797 (tyrosine 797) is a Phosphotyrosine. The Protein kinase domain maps to 830 to 1158; sequence LKLGKPLGRG…FSELVEHLGN (329 aa). Residues 836–844 and lysine 864 each bind ATP; that span reads LGRGAFGQV. At tyrosine 947 the chain carries Phosphotyrosine; by autocatalysis. Serine 978 and serine 980 each carry phosphoserine. Tyrosine 992 carries the post-translational modification Phosphotyrosine; by autocatalysis. Cysteine 1020 and cysteine 1041 are disulfide-bonded. The Proton acceptor role is filled by aspartate 1024. Residues tyrosine 1050, tyrosine 1055, tyrosine 1171, and tyrosine 1210 each carry the phosphotyrosine; by autocatalysis modification. Phosphoserine is present on residues serine 1227 and serine 1231. Threonine 1234 carries the phosphothreonine modification. The segment at 1267-1314 is disordered; the sequence is TLEDRNKLSPSFGGMMPSKSRESVASEGSNQTSGYQSGYHSDDTDTTV. Residues 1292–1305 show a composition bias toward polar residues; the sequence is SEGSNQTSGYQSGY. A phosphotyrosine; by autocatalysis mark is found at tyrosine 1301, tyrosine 1305, and tyrosine 1315.

It belongs to the protein kinase superfamily. Tyr protein kinase family. CSF-1/PDGF receptor subfamily. In terms of assembly, homodimer in the presence of bound dimeric VEGFA, VEGFC or VEGFD ligands; monomeric in the absence of bound ligands. Can also form heterodimers with FLT1/VEGFR1 and KDR/VEGFR2. Interacts (tyrosine phosphorylated) with LFYN, NCK1, PLCG1. Interacts (tyrosine-phosphorylated active form preferentially) with DAB2IP (via C2 domain and active form preferentially); the interaction occurs at the late phase of VEGFA response and inhibits KDR/VEGFR2 activity. Interacts with SHBSH2D2A/TSAD, GRB2, MYOF, CBL and PDCD6. Interacts (via C-terminus domain) with ERN1 (via kinase domain); the interaction is facilitated in a XBP1- and vascular endothelial growth factor (VEGF)-dependent manner in endothelial cells. Interacts (via juxtamembrane region) with chaperone PDCL3 (via thioredoxin fold region); the interaction leads to increased KDR/VEGFR2 abundance through inhibition of its ubiquitination and degradation. Interacts (tyrosine phosphorylated) with CCDC88A/GIV (via SH2-like region); binding requires autophosphorylation of the KDR/VEGFR2 C-terminal region. Interacts with isoform 2 of BSG. Interacts with SLC31A1; this interaction is induced upon VEGFA stimulation leading to SLC31A1 and KDR subsequent co-internalization to early endosomes, thereby activating KDR downstream signaling in endothelial cells. Post-translationally, N-glycosylated. In terms of processing, ubiquitinated. Tyrosine phosphorylation of the receptor promotes its poly-ubiquitination, leading to its degradation via the proteasome or lysosomal proteases. Autophosphorylated on tyrosine residues upon ligand binding. Autophosphorylation occurs in trans, i.e. one subunit of the dimeric receptor phosphorylates tyrosine residues on the other subunit. Phosphorylation at Tyr-947 is important for interaction with SH2D2A/TSAD and VEGFA-mediated reorganization of the actin cytoskeleton. Phosphorylation at Tyr-1171 is important for interaction with PLCG1 and SHB. Phosphorylation at Tyr-1210 is important for interaction with NCK1 and FYN. Dephosphorylated by PTPRB. Dephosphorylated by PTPRJ at Tyr-797, Tyr-947, Tyr-992, Tyr-1050, Tyr-1055, Tyr-1171 and Tyr-1210. Post-translationally, the inhibitory disulfide bond between Cys-1020 and Cys-1041 may serve as a specific molecular switch for H(2)S-induced modification that regulates KDR/VEGFR2 function. In terms of tissue distribution, expressed in the post-pubertal mammary glands.

Its subcellular location is the cell membrane. It localises to the cytoplasm. The protein resides in the nucleus. The protein localises to the cytoplasmic vesicle. It is found in the early endosome. Its subcellular location is the cell junction. It localises to the endoplasmic reticulum. It catalyses the reaction L-tyrosyl-[protein] + ATP = O-phospho-L-tyrosyl-[protein] + ADP + H(+). Its activity is regulated as follows. Present in an inactive conformation in the absence of bound ligand. Binding of VEGFA, VEGFC or VEGFD leads to dimerization and activation by autophosphorylation on tyrosine residues. May be regulated by hydrogen sulfide (H(2)S) levels via a sensitive intracellular disulfide bond. Functionally, tyrosine-protein kinase that acts as a cell-surface receptor for VEGFA, VEGFC and VEGFD. Plays an essential role in the regulation of angiogenesis, vascular development, vascular permeability, and embryonic hematopoiesis. Promotes proliferation, survival, migration and differentiation of endothelial cells. Promotes reorganization of the actin cytoskeleton. Isoforms lacking a transmembrane domain may function as decoy receptors for VEGFA, VEGFC and/or VEGFD. Modulates FLT1 and FLT4 signaling by forming heterodimers. Binding of vascular growth factors to isoform 1 leads to the activation of several signaling cascades. Activation of PLCG1 leads to the production of the cellular signaling molecules diacylglycerol and inositol-1,4,5-trisphosphate and the activation of protein kinase C. Mediates activation of MAPK1/ERK2, MAPK3/ERK1 and the MAP kinase signaling pathway, as well as of the AKT1 signaling pathway. Mediates phosphorylation of PIK3R1, the regulatory subunit of phosphatidylinositol 3-kinase, reorganization of the actin cytoskeleton and activation of PTK2/FAK1. Required for VEGFA-mediated induction of NOS2 and NOS3, leading to the production of the signaling molecule nitric oxide (NO) by endothelial cells. Phosphorylates PLCG1. Promotes phosphorylation of FYN, NCK1, NOS3, PIK3R1, PTK2/FAK1 and SRC. The chain is Vascular endothelial growth factor receptor 2 from Rattus norvegicus (Rat).